A 732-amino-acid chain; its full sequence is Non-structural protein 4 (732 aa).

Composition is skewed to polar residues over residues 13–23 (KNKGIQQNQWH) and 31–56 (LSGQ…NSKS). Disordered regions lie at residues 13–74 (KNKG…NSAA) and 706–732 (LGRN…KQKE). Residues 719-732 (QVEEAENEEEKQKE) are compositionally biased toward acidic residues.

This chain is Non-structural protein 4, found in Catharanthus roseus (Madagascar periwinkle).